The sequence spans 210 residues: Na(+)-translocating NADH-quinone reductase subunit D (210 aa).

A run of 6 helical transmembrane segments spans residues 14–34 (PIVSNNPIALQVLGVCSALAV), 42–62 (LVMTIALTVVCAFSNLFISIL), 72–92 (IIVQMTIIASLVIVVDQVLQA), 103–123 (VFVGLIITNCIVMGRAEAYAM), 131–151 (FMDGIGNGIGYGAILLSVGFI), and 178–198 (NGLLLLPPSAFFLIGMLIWII).

Belongs to the NqrDE/RnfAE family. In terms of assembly, composed of six subunits; NqrA, NqrB, NqrC, NqrD, NqrE and NqrF.

It is found in the cell inner membrane. It carries out the reaction a ubiquinone + n Na(+)(in) + NADH + H(+) = a ubiquinol + n Na(+)(out) + NAD(+). In terms of biological role, NQR complex catalyzes the reduction of ubiquinone-1 to ubiquinol by two successive reactions, coupled with the transport of Na(+) ions from the cytoplasm to the periplasm. NqrA to NqrE are probably involved in the second step, the conversion of ubisemiquinone to ubiquinol. In Shewanella halifaxensis (strain HAW-EB4), this protein is Na(+)-translocating NADH-quinone reductase subunit D.